Reading from the N-terminus, the 143-residue chain is Submaxillary gland androgen-regulated protein 2, isoform delta (143 aa).

An N-terminal signal peptide occupies residues 1 to 22; it reads MKPLCLVFGLCVLIGCFLSSEC. Disordered regions lie at residues 28-52 and 116-143; these read GQHD…PDPN and VPRK…TDSF. 2 stretches are compositionally biased toward polar residues: residues 36–45 and 122–143; these read LSPSNPSSHF and NATP…TDSF.

It is found in the secreted. Its function is as follows. May play a role in protection or detoxification. In Mus musculus (Mouse), this protein is Submaxillary gland androgen-regulated protein 2, isoform delta (Smr2).